The primary structure comprises 300 residues: Protoheme IX farnesyltransferase (300 aa).

Helical transmembrane passes span valine 24–valine 44, tryptophan 46–isoleucine 66, proline 94–phenylalanine 114, leucine 118–leucine 138, isoleucine 146–glycine 166, alanine 172–leucine 192, leucine 217–glycine 237, serine 239–tryptophan 259, and isoleucine 278–leucine 298.

Belongs to the UbiA prenyltransferase family. Protoheme IX farnesyltransferase subfamily.

It localises to the cell inner membrane. It catalyses the reaction heme b + (2E,6E)-farnesyl diphosphate + H2O = Fe(II)-heme o + diphosphate. It participates in porphyrin-containing compound metabolism; heme O biosynthesis; heme O from protoheme: step 1/1. In terms of biological role, converts heme B (protoheme IX) to heme O by substitution of the vinyl group on carbon 2 of heme B porphyrin ring with a hydroxyethyl farnesyl side group. In Burkholderia cenocepacia (strain HI2424), this protein is Protoheme IX farnesyltransferase.